Here is a 417-residue protein sequence, read N- to C-terminus: Phosphoglycerate kinase 2 (417 aa).

Serine 4 bears the Phosphoserine mark. An N6-acetyllysine modification is found at lysine 11. (2R)-3-phosphoglycerate-binding residues include valine 23, aspartate 24, phenylalanine 25, asparagine 26, glutamine 38, and arginine 39. Lysine 48 carries the N6-acetyllysine modification. Residues serine 62, histidine 63, glycine 65, and arginine 66 each contribute to the (2R)-3-phosphoglycerate site. Residues lysine 75, lysine 86, and lysine 97 each carry the N6-acetyllysine modification. Residues leucine 122 and arginine 123 each coordinate (2R)-3-phosphoglycerate. Lysine 131 and lysine 146 each carry N6-acetyllysine. 2 residues coordinate (2R)-3-phosphoglycerate: histidine 170 and arginine 171. Tyrosine 196 is modified (phosphotyrosine). Lysine 199 carries the N6-acetyllysine modification. Residue glycine 214 coordinates ADP. Glycine 214 provides a ligand contact to CDP. Residues alanine 215 and lysine 216 each coordinate AMP. Residue alanine 215 coordinates ATP. Alanine 215 provides a ligand contact to Mg(2+). Position 219 (aspartate 219) interacts with CDP. Aspartate 219 provides a ligand contact to Mg(2+). Lysine 220 is a binding site for AMP. Lysine 220 contacts ATP. ADP is bound at residue glycine 238. Glycine 238 serves as a coordination point for CDP. Residue glycine 239 coordinates AMP. Glycine 239 serves as a coordination point for ATP. Lysine 267 and lysine 291 each carry N6-acetyllysine. Glycine 313 is a binding site for AMP. ATP is bound at residue glycine 313. Positions 338, 340, and 343 each coordinate CDP. Phenylalanine 343 is an ADP binding site. Position 344 (glutamate 344) interacts with AMP. ATP contacts are provided by glutamate 344, aspartate 375, and threonine 376. A Mg(2+)-binding site is contributed by aspartate 375.

It belongs to the phosphoglycerate kinase family. As to quaternary structure, monomer. It depends on Mg(2+) as a cofactor. As to expression, testis and sperm. Localized on the principle piece in the sperm (at protein level). Testis-specific.

It is found in the cytoplasm. It catalyses the reaction (2R)-3-phosphoglycerate + ATP = (2R)-3-phospho-glyceroyl phosphate + ADP. It functions in the pathway carbohydrate degradation; glycolysis; pyruvate from D-glyceraldehyde 3-phosphate: step 2/5. Its function is as follows. Essential for sperm motility and male fertility but is not required for the completion of spermatogenesis. The polypeptide is Phosphoglycerate kinase 2 (Pgk2) (Mus musculus (Mouse)).